The chain runs to 159 residues: Ribosomal RNA large subunit methyltransferase H (159 aa).

S-adenosyl-L-methionine contacts are provided by residues Leu-76, Gly-108, and 127–132 (FGRLTL).

The protein belongs to the RNA methyltransferase RlmH family. As to quaternary structure, homodimer.

It is found in the cytoplasm. The enzyme catalyses pseudouridine(1915) in 23S rRNA + S-adenosyl-L-methionine = N(3)-methylpseudouridine(1915) in 23S rRNA + S-adenosyl-L-homocysteine + H(+). Its function is as follows. Specifically methylates the pseudouridine at position 1915 (m3Psi1915) in 23S rRNA. This Listeria monocytogenes serovar 1/2a (strain ATCC BAA-679 / EGD-e) protein is Ribosomal RNA large subunit methyltransferase H.